Here is a 293-residue protein sequence, read N- to C-terminus: Ribosomal protein L11 methyltransferase (293 aa).

4 residues coordinate S-adenosyl-L-methionine: Thr145, Gly166, Asp188, and Asn230.

The protein belongs to the methyltransferase superfamily. PrmA family.

It localises to the cytoplasm. It carries out the reaction L-lysyl-[protein] + 3 S-adenosyl-L-methionine = N(6),N(6),N(6)-trimethyl-L-lysyl-[protein] + 3 S-adenosyl-L-homocysteine + 3 H(+). Methylates ribosomal protein L11. In Salmonella heidelberg (strain SL476), this protein is Ribosomal protein L11 methyltransferase.